We begin with the raw amino-acid sequence, 678 residues long: Glycine--tRNA ligase beta subunit (678 aa).

This sequence belongs to the class-II aminoacyl-tRNA synthetase family. Tetramer of two alpha and two beta subunits.

The protein localises to the cytoplasm. It carries out the reaction tRNA(Gly) + glycine + ATP = glycyl-tRNA(Gly) + AMP + diphosphate. The chain is Glycine--tRNA ligase beta subunit from Streptococcus pneumoniae (strain Taiwan19F-14).